We begin with the raw amino-acid sequence, 323 residues long: Polycomb complex protein BMI-1-B (323 aa).

An RING-type zinc finger spans residues 18-57; the sequence is CVLCGGYFIDAATIIECLHSFCKTCIVRYLETSKYCPICD. Positions 81–95 match the Nuclear localization signal motif; the sequence is KLVPGLFKGEMKRRR. Residues 238-310 form a disordered region; that stretch reads PHTDRINNTS…HQNPFANRAR (73 aa). The span at 287 to 301 shows a compositional bias: low complexity; that stretch reads HISSTINGTNSSSSH.

In terms of assembly, component of a PRC1-like complex. Interacts with cbx4.

It localises to the nucleus. Functionally, component of a Polycomb group (PcG) multiprotein PRC1-like complex, a complex class required to maintain the transcriptionally repressive state of many genes, including Hox genes, throughout development. PcG PRC1 complex acts via chromatin remodeling and modification of histones; it mediates monoubiquitination of histone H2A 'Lys-119', rendering chromatin heritably changed in its expressibility. In the PRC1 complex, it is required to stimulate the E3 ubiquitin-protein ligase activity of rnf2. This is Polycomb complex protein BMI-1-B (bmi1b) from Xenopus laevis (African clawed frog).